Here is a 555-residue protein sequence, read N- to C-terminus: Glucose-6-phosphate isomerase (555 aa).

Glutamate 365 acts as the Proton donor in catalysis. Catalysis depends on residues histidine 396 and lysine 522.

The protein belongs to the GPI family.

It is found in the cytoplasm. It catalyses the reaction alpha-D-glucose 6-phosphate = beta-D-fructose 6-phosphate. It participates in carbohydrate biosynthesis; gluconeogenesis. Its pathway is carbohydrate degradation; glycolysis; D-glyceraldehyde 3-phosphate and glycerone phosphate from D-glucose: step 2/4. Its function is as follows. Catalyzes the reversible isomerization of glucose-6-phosphate to fructose-6-phosphate. The chain is Glucose-6-phosphate isomerase from Psychrobacter cryohalolentis (strain ATCC BAA-1226 / DSM 17306 / VKM B-2378 / K5).